Reading from the N-terminus, the 1553-residue chain is Probable serine/threonine-protein kinase qkgA (1553 aa).

Positions 113-142 are disordered; sequence SSSSSSSSTSSSPSLTSSPSSPISTSPPYH. LRR repeat units follow at residues 287–309, 311–333, 334–356, and 357–378; these read NGTFLLLSKSNITRFPMSIINMC, QLVELDMSNNRITEIPIEITELK, FLKNLNLSDNLINDIPLEICNLT, and LLKVLLLNENPLNNFPSSIVEL. The Roc domain maps to 395–619; that stretch reads SCETWNKVKL…KRLIHESEKS (225 aa). Disordered regions lie at residues 643-696, 955-1019, and 1048-1090; these read NQGR…QQQQ, ISNS…PSSQ, and NQNG…NNNK. Low complexity-rich tracts occupy residues 648–675, 683–696, 956–1018, and 1059–1090; these read SISNSASNSSSSLLNSSSSSSPSLTSKK, SQQQQQQHQQQQQQ, SNST…SPSS, and TTTTTSTSTSTTSTTTPTTTTPTIPIKNNNNK. The COR domain maps to 694–893; the sequence is QQQLQQSIKE…KTYWKDGVLL (200 aa). The 305-residue stretch at 1242-1546 folds into the Protein kinase domain; it reads ILYERQIGEG…QTSYFDSPFL (305 aa). ATP contacts are provided by residues 1248–1256 and Lys1271; that span reads IGEGGFGLI. Residue Asp1393 is the Proton acceptor of the active site.

This sequence belongs to the protein kinase superfamily. TKL Ser/Thr protein kinase family. ROCO subfamily.

It carries out the reaction L-seryl-[protein] + ATP = O-phospho-L-seryl-[protein] + ADP + H(+). The catalysed reaction is L-threonyl-[protein] + ATP = O-phospho-L-threonyl-[protein] + ADP + H(+). Involved in growth, and during development, in aggregation. This is Probable serine/threonine-protein kinase qkgA (qkgA-1) from Dictyostelium discoideum (Social amoeba).